A 284-amino-acid chain; its full sequence is Bifunctional protein FolD (284 aa).

Residues 166–168 (GAS) and Ile232 contribute to the NADP(+) site.

The protein belongs to the tetrahydrofolate dehydrogenase/cyclohydrolase family. As to quaternary structure, homodimer.

The catalysed reaction is (6R)-5,10-methylene-5,6,7,8-tetrahydrofolate + NADP(+) = (6R)-5,10-methenyltetrahydrofolate + NADPH. It carries out the reaction (6R)-5,10-methenyltetrahydrofolate + H2O = (6R)-10-formyltetrahydrofolate + H(+). It functions in the pathway one-carbon metabolism; tetrahydrofolate interconversion. Catalyzes the oxidation of 5,10-methylenetetrahydrofolate to 5,10-methenyltetrahydrofolate and then the hydrolysis of 5,10-methenyltetrahydrofolate to 10-formyltetrahydrofolate. This chain is Bifunctional protein FolD, found in Pseudomonas fluorescens (strain Pf0-1).